The following is a 61-amino-acid chain: UPF0434 protein PSPA7_2181 (61 aa).

It belongs to the UPF0434 family.

The chain is UPF0434 protein PSPA7_2181 from Pseudomonas paraeruginosa (strain DSM 24068 / PA7) (Pseudomonas aeruginosa (strain PA7)).